The following is a 688-amino-acid chain: Sodium channel and clathrin linker 1 (688 aa).

Ala-2 is modified (N-acetylalanine). Residues 69–673 (ELNGQLKYYQ…SASQQLSVIT (605 aa)) adopt a coiled-coil conformation. Ser-681 carries the phosphoserine modification.

In terms of assembly, interacts with SCN10A and clathrin. Identified in a complex containing SCN10A, clathrin and SCLT1.

It is found in the cytoplasm. The protein resides in the cytoskeleton. It localises to the microtubule organizing center. The protein localises to the centrosome. Its subcellular location is the centriole. Its function is as follows. Adapter protein that links SCN10A to clathrin. Regulates SCN10A channel activity, possibly by promoting channel internalization. The protein is Sodium channel and clathrin linker 1 (SCLT1) of Homo sapiens (Human).